The sequence spans 333 residues: E3 ubiquitin-protein ligase MIR1 (333 aa).

An RING-CH-type zinc finger spans residues 1 to 60 (MEDEDVPVCWICNEELGNERFRACGCTGELENVHRSCLSTWLTISRNTACQICGVVYNTR). At 1–82 (MEDEDVPVCW…PRLTYQEGLE (82 aa)) the chain is on the cytoplasmic side. The Zn(2+) site is built by C9, C12, C24, C26, H34, C37, C50, and C53. The helical transmembrane segment at 83–103 (LIVFIFIMTLGAAGLAAATWV) threads the bilayer. Residues 104–121 (WLYIVGGHDPEIDHVAAA) lie on the Extracellular side of the membrane. Residues 122–142 (AYYVFFVFYQLFVVFGLGAFF) traverse the membrane as a helical segment. Over 143–333 (HMMRHVGRAY…SAVSSALMFH (191 aa)) the chain is Cytoplasmic. Residues 187–257 (GDNQDEEGPA…GRDDNVEPTA (71 aa)) are disordered. Residues 195 to 221 (PAGAAPGDQNGPAGAAPGDQDGPADGA) are compositionally biased toward low complexity. The span at 235–252 (AGYKEAGEPTHNDGRDDN) shows a compositional bias: basic and acidic residues.

Binds human MHC-I and CD1D.

The protein resides in the host cell membrane. It is found in the host endoplasmic reticulum. It carries out the reaction [E2 ubiquitin-conjugating enzyme]-S-ubiquitinyl-L-cysteine + [acceptor protein]-L-cysteine = [E2 ubiquitin-conjugating enzyme]-L-cysteine + [acceptor protein]-S-ubiquitinyl-L-cysteine.. The protein operates within protein modification; protein ubiquitination. Membrane-bound E3 ubiquitin ligase expressed during late stages of lytic replication to mediate polyubiquitination of various host membrane proteins related to the immune response. Promotes ubiquitination and subsequent degradation of host MHC-I and CD1D molecules, DC-SIGN and DC-SIGNR, presumably to prevent lysis of infected cells by cytotoxic T-lymphocytes. Binds target molecules through transmembrane interaction. E3 ubiquitin-protein ligases accept ubiquitin from specific E2 ubiquitin-conjugating enzymes, and then transfer it to target protein. The result of this ubiquitination is the enhancement of the endocytosis of the target chain and the delivery to the lysosome, where it is proteolytically destroyed. Induces ubiquitination not only on lysines, but also on cysteine residues. The chain is E3 ubiquitin-protein ligase MIR1 (K3) from Human herpesvirus 8 type P (isolate GK18) (HHV-8).